Reading from the N-terminus, the 383-residue chain is Insulinoma-associated protein 1a (383 aa).

Residues 1–20 (MPRGFLVKRNKKATPVSYRV) are SNAG domain. Disordered stretches follow at residues 99–141 (PVDL…AMRK) and 229–269 (RWHK…SEDG). The segment covering 105 to 120 (GTSNSNRTGTTVTTKR) has biased composition (polar residues). Over residues 130-140 (KPASKKAKAMR) the composition is skewed to basic residues. The C2H2-type 1 zinc-finger motif lies at 209-231 (YRCPECDKLFSCPANLASHRRWH). Positions 244-256 (APEKEETSSDRDT) are enriched in basic and acidic residues. The C2H2-type 2; degenerate zinc finger occupies 271 to 295 (YDCQHCGKKFKRQAYLKKHVTAHHD). 2 consecutive C2H2-type zinc fingers follow at residues 314-337 (HLCP…RLQH) and 342-365 (YPCK…NKCH).

Belongs to the INSM1 family.

Its subcellular location is the nucleus. May act as a transcriptional regulator. May play a role in neurogenesis and neuroendocrine cell differentiation during embryonic development. The chain is Insulinoma-associated protein 1a (insm1a) from Danio rerio (Zebrafish).